Reading from the N-terminus, the 397-residue chain is CCA-adding enzyme (397 aa).

ATP is bound by residues Gly-26 and Arg-29. Residues Gly-26 and Arg-29 each coordinate CTP. Residues Asp-39 and Asp-41 each contribute to the Mg(2+) site. ATP-binding residues include Arg-110, Asp-153, Arg-156, Arg-159, and Arg-162. Positions 110, 153, 156, 159, and 162 each coordinate CTP.

Belongs to the tRNA nucleotidyltransferase/poly(A) polymerase family. Bacterial CCA-adding enzyme type 3 subfamily. Homodimer. Mg(2+) serves as cofactor.

The catalysed reaction is a tRNA precursor + 2 CTP + ATP = a tRNA with a 3' CCA end + 3 diphosphate. It carries out the reaction a tRNA with a 3' CCA end + 2 CTP + ATP = a tRNA with a 3' CCACCA end + 3 diphosphate. In terms of biological role, catalyzes the addition and repair of the essential 3'-terminal CCA sequence in tRNAs without using a nucleic acid template. Adds these three nucleotides in the order of C, C, and A to the tRNA nucleotide-73, using CTP and ATP as substrates and producing inorganic pyrophosphate. tRNA 3'-terminal CCA addition is required both for tRNA processing and repair. Also involved in tRNA surveillance by mediating tandem CCA addition to generate a CCACCA at the 3' terminus of unstable tRNAs. While stable tRNAs receive only 3'-terminal CCA, unstable tRNAs are marked with CCACCA and rapidly degraded. The polypeptide is CCA-adding enzyme (Bacillus cytotoxicus (strain DSM 22905 / CIP 110041 / 391-98 / NVH 391-98)).